A 248-amino-acid chain; its full sequence is 4-hydroxy-tetrahydrodipicolinate reductase (248 aa).

NAD(+) contacts are provided by residues 9 to 14 (GAKGRV), 77 to 79 (GTT), and 104 to 107 (APNF). The Proton donor/acceptor role is filled by His134. His135 lines the (S)-2,3,4,5-tetrahydrodipicolinate pocket. Lys138 serves as the catalytic Proton donor. 144 to 145 (GT) is a (S)-2,3,4,5-tetrahydrodipicolinate binding site.

It belongs to the DapB family.

The protein resides in the cytoplasm. It catalyses the reaction (S)-2,3,4,5-tetrahydrodipicolinate + NAD(+) + H2O = (2S,4S)-4-hydroxy-2,3,4,5-tetrahydrodipicolinate + NADH + H(+). It carries out the reaction (S)-2,3,4,5-tetrahydrodipicolinate + NADP(+) + H2O = (2S,4S)-4-hydroxy-2,3,4,5-tetrahydrodipicolinate + NADPH + H(+). It functions in the pathway amino-acid biosynthesis; L-lysine biosynthesis via DAP pathway; (S)-tetrahydrodipicolinate from L-aspartate: step 4/4. Its function is as follows. Catalyzes the conversion of 4-hydroxy-tetrahydrodipicolinate (HTPA) to tetrahydrodipicolinate. The polypeptide is 4-hydroxy-tetrahydrodipicolinate reductase (Corynebacterium aurimucosum (strain ATCC 700975 / DSM 44827 / CIP 107346 / CN-1) (Corynebacterium nigricans)).